Reading from the N-terminus, the 263-residue chain is Indolethylamine N-methyltransferase (263 aa).

N6-succinyllysine is present on Lys13. S-adenosyl-L-methionine contacts are provided by residues Tyr20, Tyr25, 63–64, Tyr69, Asp85, and Asn90; that span reads GS. Lys96 carries the post-translational modification N6-succinyllysine. S-adenosyl-L-methionine-binding positions include 142 to 143 and Leu163; that span reads DV.

It belongs to the class I-like SAM-binding methyltransferase superfamily. NNMT/PNMT/TEMT family. As to quaternary structure, monomer.

The protein resides in the cytoplasm. The catalysed reaction is a tertiary amine + S-adenosyl-L-methionine = a methylated tertiary amine + S-adenosyl-L-homocysteine + H(+). It catalyses the reaction a secondary amine + S-adenosyl-L-methionine = a methylated secondary amine + S-adenosyl-L-homocysteine + H(+). It carries out the reaction a primary amine + S-adenosyl-L-methionine = a methylated primary amine + S-adenosyl-L-homocysteine + H(+). The enzyme catalyses dimethyl sulfide + S-adenosyl-L-methionine = trimethylsulfonium + S-adenosyl-L-homocysteine. Its function is as follows. Catalyzes the N-methylation of tryptamine and structurally related compounds. Functions as a thioether S-methyltransferase and is active with a variety of thioethers and the corresponding selenium and tellurium compounds, including 3-methylthiopropionaldehyde, dimethyl selenide, dimethyl telluride, 2-methylthioethylamine, 2-methylthioethanol, methyl-n-propyl sulfide and diethyl sulfide. Plays an important role in the detoxification of selenium compounds. This is Indolethylamine N-methyltransferase (INMT) from Pongo abelii (Sumatran orangutan).